Consider the following 387-residue polypeptide: EARP-interacting protein homolog (387 aa).

4 WD repeats span residues Thr132 to Val172, Lys182 to Cys222, Ala226 to Lys266, and Glu270 to Phe310. The interval Gly311–Ile339 is disordered. The span at Asp315–Pro326 shows a compositional bias: acidic residues. A WD 5 repeat occupies Glu345–Ile385.

The protein belongs to the WD repeat EIPR1 family.

The protein resides in the golgi apparatus. The protein localises to the trans-Golgi network. In terms of biological role, may act as a component of endosomal retrieval machinery that is involved in protein transport from early endosomes to either recycling endosomes or the trans-Golgi network. This Xenopus laevis (African clawed frog) protein is EARP-interacting protein homolog.